Consider the following 113-residue polypeptide: Meiotically up-regulated gene 98 protein, mitochondrial (113 aa).

It is found in the mitochondrion. In terms of biological role, has a role in meiosis. This chain is Meiotically up-regulated gene 98 protein, mitochondrial (mug98), found in Schizosaccharomyces pombe (strain 972 / ATCC 24843) (Fission yeast).